The sequence spans 220 residues: Protein LURP-one-related 12 (220 aa).

This sequence belongs to the LOR family.

Its function is as follows. Might be related to the phospholipid scramblase and tubby-like superfamily of membrane tethered transcription factors. The protein is Protein LURP-one-related 12 of Arabidopsis thaliana (Mouse-ear cress).